Consider the following 97-residue polypeptide: UPF0473 protein Exig_2070 (97 aa).

It belongs to the UPF0473 family.

This chain is UPF0473 protein Exig_2070, found in Exiguobacterium sibiricum (strain DSM 17290 / CCUG 55495 / CIP 109462 / JCM 13490 / 255-15).